A 354-amino-acid polypeptide reads, in one-letter code: Guanine nucleotide-binding protein G(i) subunit alpha-3 (354 aa).

The N-myristoyl glycine moiety is linked to residue G2. The S-palmitoyl cysteine moiety is linked to residue C3. The 323-residue stretch at 32 to 354 (KEVKLLLLGA…KNNLKECGLY (323 aa)) folds into the G-alpha domain. A G1 motif region spans residues 35-48 (KLLLLGAGESGKST). GTP-binding residues include G42, E43, S44, G45, K46, S47, T48, D150, S151, L175, R176, T177, R178, V179, K180, T181, V201, G203, N269, K270, D272, L273, C325, A326, and T327. Residue S47 participates in Mg(2+) binding. The tract at residues 173–181 (DVLRTRVKT) is G2 motif. T181 provides a ligand contact to Mg(2+). The G3 motif stretch occupies residues 196-205 (FKMFDVGGQR). The segment at 265–272 (ILFLNKKD) is G4 motif. The segment at 324–329 (TCATDT) is G5 motif.

It belongs to the G-alpha family. G(i/o/t/z) subfamily. As to quaternary structure, heterotrimeric G proteins are composed of 3 units; alpha, beta and gamma. The alpha subunit contains the guanine nucleotide binding site. GTP binding causes dissociation of the heterotrimer, liberating the individual subunits so that they can interact with downstream effector proteins. Forms a complex with CCDC88A/GIV and EGFR which leads to enhanced EGFR signaling and triggering of cell migration; ligand stimulation is required for recruitment of GNAI3 to the complex. Interacts (inactive GDP-bound form) with CCDC88A/GIV (via GBA motif); the interaction leads to activation of GNAI3. Interacts (inactive GDP-bound form) with CCDC88C/DAPLE (via GBA motif); the interaction leads to activation of GNAI3. Interacts (inactive GDP-bound form) with NUCB1 (via GBA motif) and NUCB2 (via GBA motif); the interaction leads to activation of GNAI3. Interacts (inactive GDP-bound form) with PLCD4 (via GBA motif); the interaction leads to activation of GNAI3. Interacts with INSR; the interaction is probably mediated by CCDC88A/GIV. Interacts with GPSM1. Interacts (GDP-bound form) with GPSM2 (via GoLoco domains). Does not interact with RGS2. Interacts with RGS8 and RGS10; this strongly enhances the intrinsic GTPase activity. Interacts with RGS16; this strongly enhances the intrinsic GTPase activity. Interacts with RGS12. Interacts (via active GTP- or inactive GDP-bound form) with RGS14. Interacts (via active GTP-bound form) with TRPC5 (via ANK repeats) in a homotetrameric ion channel; the interaction is direct and activates the channel activity.

It is found in the cytoplasm. Its subcellular location is the cell membrane. The protein resides in the cytoskeleton. It localises to the microtubule organizing center. The protein localises to the centrosome. Its function is as follows. Heterotrimeric guanine nucleotide-binding proteins (G proteins) function as transducers downstream of G protein-coupled receptors (GPCRs) in numerous signaling cascades. The alpha chain contains the guanine nucleotide binding site and alternates between an active, GTP-bound state and an inactive, GDP-bound state. Signaling by an activated GPCR promotes GDP release and GTP binding. The alpha subunit has a low GTPase activity that converts bound GTP to GDP, thereby terminating the signal. Both GDP release and GTP hydrolysis are modulated by numerous regulatory proteins. Signaling is mediated via effector proteins, such as adenylate cyclase. Inhibits adenylate cyclase activity, leading to decreased intracellular cAMP levels. Stimulates the activity of receptor-regulated K(+) channels. The active GTP-bound form prevents the association of RGS14 with centrosomes and is required for the translocation of RGS14 from the cytoplasm to the plasma membrane. May play a role in cell division. The active GTP-bound form activates the calcium permeant TRPC5 ion channels. This chain is Guanine nucleotide-binding protein G(i) subunit alpha-3 (GNAI3), found in Cricetulus griseus (Chinese hamster).